A 439-amino-acid chain; its full sequence is MTTVDIGRYKRLVQYFWDPEPTNNIASKSPIWCLGEEYLVSDKSSPSAVTESPPKEGGYLLAQSLSTTETTTPPDSTVGSLESSSEYDNCDTASTDGGWPTAFLDDFEAKIWLTYRSNFPAIAKSQDPKALSAMSLSVRLRSQLVDQGGFTSDTGWGCMIRSGQSLLANALLTLRMGREWRRGSSSNEERKILSLFADDPRAPYSIHKFVEHGASACGKHPGEWFGPSAAARCIQALTNSQVESELRVYITGDGSDVYEDTFMSIAKPNSTKFTPTLILVGTRLGLDKITPVYWEALKSSLQMPQSVGIAGGRPSSSHYFIGVQESDFFYLDPHQTRPALPFNDNVEDYTPEDIDSCHTRRLRRLHIKEMDPSMLIAFLIRDENDWKDWRRAVREVQGKGVIHVADRDPALHGLGAERDGAIDEVETFDDDDDDTVLNG.

The interval 65-91 (LSTTETTTPPDSTVGSLESSSEYDNCD) is disordered. Positions 66-77 (STTETTTPPDST) are enriched in low complexity. Residues 78–91 (VGSLESSSEYDNCD) show a composition bias toward polar residues. Cys-158 functions as the Nucleophile in the catalytic mechanism. Active-site residues include Asp-332 and His-334.

Belongs to the peptidase C54 family.

The protein localises to the cytoplasm. Its subcellular location is the nucleus. The protein resides in the preautophagosomal structure. It catalyses the reaction [protein]-C-terminal L-amino acid-glycyl-phosphatidylethanolamide + H2O = [protein]-C-terminal L-amino acid-glycine + a 1,2-diacyl-sn-glycero-3-phosphoethanolamine. Functionally, cysteine protease that plays a key role in cytoplasm to vacuole transport (Cvt) and autophagy by mediating both proteolytic activation and delipidation of ATG8. Required for selective autophagic degradation of the nucleus (nucleophagy) as well as for mitophagy which contributes to regulate mitochondrial quantity and quality by eliminating the mitochondria to a basal level to fulfill cellular energy requirements and preventing excess ROS production. The protease activity is required for proteolytic activation of ATG8: cleaves the C-terminal amino acid of ATG8 to reveal a C-terminal glycine. ATG8 ubiquitin-like activity requires the exposure of the glycine at the C-terminus for its conjugation to phosphatidylethanolamine (PE) and its insertion to membranes, which is necessary for autophagy. The ATG8-PE conjugate mediates tethering between adjacent membranes and stimulates membrane hemifusion, leading to expansion of the autophagosomal membrane during autophagy. In addition to the protease activity, also catalyzes deconjugation of PE-conjugated forms of ATG8 during macroautophagy: ATG8 delipidation is required to release the protein from membranes, which facilitates multiple events during macroautophagy, and especially for efficient autophagosome biogenesis, the assembly of ATG9-containing tubulovesicular clusters into phagophores/autophagosomes, and for the disassembly of PAS-associated ATG components. ATG8 delipidation by ATG4 also recycles ATG8-PE generated on inappropriate membranes to maintain a reservoir of unlipidated ATG8 that is required for autophagosome formation at the PAS. This Sclerotinia sclerotiorum (strain ATCC 18683 / 1980 / Ss-1) (White mold) protein is Probable cysteine protease atg4 (atg4).